We begin with the raw amino-acid sequence, 191 residues long: 3-hydroxyanthranilate 3,4-dioxygenase 2 (191 aa).

Position 48 (R48) interacts with O2. Residues H52, E73, and H111 each contribute to the Fe cation site. Residue E73 participates in substrate binding. 2 residues coordinate substrate: R115 and E125.

Belongs to the 3-HAO family. The cofactor is Fe(2+).

Its subcellular location is the cytoplasm. The enzyme catalyses 3-hydroxyanthranilate + O2 = (2Z,4Z)-2-amino-3-carboxymuconate 6-semialdehyde. Its pathway is cofactor biosynthesis; NAD(+) biosynthesis; quinolinate from L-kynurenine: step 3/3. Catalyzes the oxidative ring opening of 3-hydroxyanthranilate to 2-amino-3-carboxymuconate semialdehyde, which spontaneously cyclizes to quinolinate. The sequence is that of 3-hydroxyanthranilate 3,4-dioxygenase 2 (bna1-2) from Aspergillus clavatus (strain ATCC 1007 / CBS 513.65 / DSM 816 / NCTC 3887 / NRRL 1 / QM 1276 / 107).